Reading from the N-terminus, the 355-residue chain is MEPPAGAAATVKDPDHDPVKTKVSAPAADPKPRTSSQKAGHSLQDWDTIATVGTGTFGRVNLVKEKTGRQYCALKIMSIPDVIRLKQEQHVQNEKAVLKEINHPFLIKLLWTGHDNRFLYMLMEFVPGGELFTYLRNRGRFSSVASVFYATEIVCAIEYLHSKEIVYRDLKPENILLDREGHIKLTDFGFAKKLVDRTWTLCGTPEYLAPEVIQSKGHGRAVDWWALGILIFEMLSGFPPFFDDNPFGIYQKILACKIDFPRQLDFTSKDLIKKLLVVDRTRRLGNMKNGAEDIKRHRWFRGVEWESVPQRKLKPPIVPKLSGDGDISNFETYPESELDKTPSVSDKDLETFKNF.

The residue at position 1 (methionine 1) is an N-acetylmethionine. The interval 1-42 (MEPPAGAAATVKDPDHDPVKTKVSAPAADPKPRTSSQKAGHS) is disordered. A Protein kinase domain is found at 46 to 300 (WDTIATVGTG…AEDIKRHRWF (255 aa)). ATP contacts are provided by residues 52–60 (VGTGTFGRV) and lysine 75. Aspartate 169 functions as the Proton acceptor in the catalytic mechanism. Residue threonine 200 is modified to Phosphothreonine. One can recognise an AGC-kinase C-terminal domain in the interval 301 to 355 (RGVEWESVPQRKLKPPIVPKLSGDGDISNFETYPESELDKTPSVSDKDLETFKNF). Residues 316-355 (PIVPKLSGDGDISNFETYPESELDKTPSVSDKDLETFKNF) form a disordered region. The segment covering 337–355 (ELDKTPSVSDKDLETFKNF) has biased composition (basic and acidic residues).

Belongs to the protein kinase superfamily. AGC Ser/Thr protein kinase family. cAMP subfamily. In terms of assembly, like other cAMP-dependent protein kinases, the inactive holoenzyme is probably composed of 2 PRKX catalytic subunits and a dimer of regulatory subunits. Interacts (cAMP-dependent) specifically with the regulatory subunits PRKAR1A and PRKAR1B. Compared to other cAMP-dependent serine/threonine protein kinases, does not interact with the 2 other PKA regulatory subunits PRKAR2A and PRKAR2B. Interacts with PIN1 (via WW domain). Interacts with cAMP-dependent protein kinase inhibitor/PKI proteins; inhibits PRKX. Interacts with GPKOW. Interacts with SMAD6. Interacts with PKD1; involved in differentiation and controlled morphogenesis of the kidney. Phosphorylated; autophosphorylates in vitro. As to expression, widely expressed.

It is found in the cytoplasm. The protein resides in the nucleus. The enzyme catalyses L-seryl-[protein] + ATP = O-phospho-L-seryl-[protein] + ADP + H(+). It catalyses the reaction L-threonyl-[protein] + ATP = O-phospho-L-threonyl-[protein] + ADP + H(+). Its activity is regulated as follows. Binding of cAMP to the PRKAR1A or PRKAR1B regulatory subunits induces dissociation of the holoenzyme heterotetramer. The released monomeric PRKX is then active and able to phosphorylate its substrates. In terms of biological role, serine/threonine protein kinase regulated by and mediating cAMP signaling in cells. Acts through phosphorylation of downstream targets that may include CREB, SMAD6 and PKD1 and has multiple functions in cellular differentiation and epithelial morphogenesis. Regulates myeloid cell differentiation through SMAD6 phosphorylation. Involved in nephrogenesis by stimulating renal epithelial cell migration and tubulogenesis. Also involved in angiogenesis through stimulation of endothelial cell proliferation, migration and vascular-like structure formation. The polypeptide is cAMP-dependent protein kinase catalytic subunit PRKX (Prkx) (Mus musculus (Mouse)).